The primary structure comprises 233 residues: MSSYFVNSTFPVSLPGGQDSLLGQIPLYSSGYTDPLRHYSNAATYGAANMQEKVYPASYYQQTGAAAIYGRAGGGAPCEYNPVGTFYKETEGSCAFSSRDDQPLFVTQEHQQRKVECPEQSVSMGSSIDDKSSTLIYPWMQRMNACSAGPFGNSGRRGRQTYTRYQTLELEKEFHFNRYLTRRRRIEISHALCLTERQIKIWFQNRRMKWKKENKLLNPSKTPEEEEEAEKKS.

The Antp-type hexapeptide motif lies at 136-141; the sequence is IYPWMQ. The segment at residues 155 to 214 is a DNA-binding region (homeobox); that stretch reads GRRGRQTYTRYQTLELEKEFHFNRYLTRRRRIEISHALCLTERQIKIWFQNRRMKWKKEN. The tract at residues 213 to 233 is disordered; sequence ENKLLNPSKTPEEEEEAEKKS. Over residues 224 to 233 the composition is skewed to acidic residues; that stretch reads EEEEEAEKKS.

The protein belongs to the Antp homeobox family.

The protein resides in the nucleus. Its function is as follows. Sequence-specific transcription factor which is part of a developmental regulatory system that provides cells with specific positional identities on the anterior-posterior axis. The polypeptide is Homeobox protein Hox-B6b (hoxb6b) (Takifugu rubripes (Japanese pufferfish)).